We begin with the raw amino-acid sequence, 148 residues long: Large ribosomal subunit protein bL9 (148 aa).

This sequence belongs to the bacterial ribosomal protein bL9 family.

Binds to the 23S rRNA. This Lysinibacillus sphaericus (strain C3-41) protein is Large ribosomal subunit protein bL9.